Here is a 629-residue protein sequence, read N- to C-terminus: Forkhead box protein O (629 aa).

Thr-49 carries the post-translational modification Phosphothreonine; by PKB/AKT1. Ser-78 is modified (phosphoserine). The segment at residues 98–204 (WGNLSYADLI…ETSRYEKRRG (107 aa)) is a DNA-binding region (fork-head). Disordered regions lie at residues 185–208 (KSVR…RAKK), 220–274 (GLND…SPIR), 321–368 (QQQF…QTLQ), 394–417 (SPNS…DSLN), and 563–597 (QHLQ…NSSL). Ser-193 is subject to Phosphoserine; by PKB/AKT1. Composition is skewed to polar residues over residues 224-233 (ATPSPSSSVS) and 259-268 (RASSNASSCG). Position 262 is a phosphoserine; by PKB/AKT1 (Ser-262). Phosphoserine is present on residues Ser-265, Ser-266, and Ser-271. A compositionally biased stretch (pro residues) spans 332 to 341 (SQPPPPPYQP). The segment covering 342–356 (PQLQQQQQQQPSYSL) has biased composition (low complexity). A compositionally biased stretch (polar residues) spans 394-403 (SPNSVTTTMS).

As to quaternary structure, interacts with melt.

The protein localises to the cytoplasm. It is found in the nucleus. Functionally, transcription factor involved in the regulation of the insulin signaling pathway. Consistently activates both the downstream target Thor\d4EBP and the feedback control target InR. Involved in negative regulation of the cell cycle, modulating cell growth and proliferation. In response to cellular stresses, such as nutrient deprivation or increased levels of reactive oxygen species, foxo is activated and inhibits growth through the action of target genes such as Thor. Foxo activated in the adult fat body can regulate lifespan in adults; an insulin peptide itself may function as one secondary messenger of insulin-regulated aging. Also regulates Lip4, homolog of human acid lipases, thereby acting as a key modulator of lipid metabolism by insulin signaling and integrates insulin responses to glucose and lipid homeostasis. The protein is Forkhead box protein O of Drosophila persimilis (Fruit fly).